Consider the following 9439-residue polypeptide: Extracellular matrix-binding protein ebh (9439 aa).

30 FIVAR domains span residues 1815–1871, 1901–1957, 1985–2041, 2071–2127, 2155–2211, 2241–2297, 2325–2381, 2411–2467, 2488–2551, 2581–2638, 2665–2720, 2748–2804, 2832–2888, 2918–2974, 3002–3058, 3088–3144, 3172–3228, 3258–3314, 3335–3398, 3428–3484, 3512–3567, 3595–3650, 3678–3733, 3802–3860, 3928–3983, 4056–4114, 4182–4240, 4308–4365, 4433–4491, and 4559–4617; these read ARRR…VNSA, AKEQ…INDA, AYDT…VRDA, AKKR…ITSE, AYNK…VTQA, AKNR…ISSE, AYNK…VEDA, AKEK…ITEN, DTTS…VNNA, ARNR…STEI, AKNQ…IRTN, AKTA…VSDE, AYNQ…VNNA, AKEQ…ISNA, AYNQ…VTAA, AKQQ…ITNE, AYNQ…VAQA, AKNQ…ISDE, DTTE…VNNA, ARLN…ITTE, AKTA…IKTN, IKRQ…VKES, AKNR…IRQN, SMTA…IDQK, AMTQ…LDPA, AMQA…VNQK, SMGT…VDNA, AMHT…INQK, VMEQ…IEQA, and SMQT…IDQT. The segment covering 2495–2507 has biased composition (basic and acidic residues); that stretch reads EVRKLSRRGDTNN. Positions 2495-2514 are disordered; the sequence is EVRKLSRRGDTNNKKPSSVS. Residues 2925 to 2938 show a composition bias toward polar residues; the sequence is AVDQVPSTEGMTQQ. Positions 2925-2951 are disordered; it reads AVDQVPSTEGMTQQTKDDYNSKQQAAQ. Positions 4649–4674 are disordered; it reads GYLNDPQKSGEESLVNGSNTRSEVEE. FIVAR domains follow at residues 4685–4743, 4811–4869, 4937–4995, 5063–5115, 5189–5246, 5314–5372, 5440–5498, 5566–5624, 5692–5750, 5818–5875, 5943–6000, 6068–6126, 6194–6252, and 6320–6378; these read AMKQ…IEQK, AMQA…IEQA, AMSN…IEQA, AMEA…VLDK, AMLG…INQL, LMGA…VTTA, AMGE…IDQA, AMKK…ITNA, AMKQ…IADT, DMST…LQDL, AMKA…IKQA, KMEE…INRT, AMQQ…IQAI, and EMGT…IADA. Residues 5699–5712 are compositionally biased toward polar residues; sequence QVNQDDQISNSSPF. The segment at 5699–5719 is disordered; sequence QVNQDDQISNSSPFINEDSDK. The disordered stretch occupies residues 6413–6434; the sequence is NNSQRQSEHDEINSAPSRTEVS. 18 FIVAR domains span residues 6446–6504, 6572–6630, 6698–6755, 6823–6877, 6949–7007, 7075–7133, 7201–7259, 7327–7384, 7452–7510, 7578–7636, 7704–7762, 7830–7888, 7956–8010, 8078–8137, 8205–8264, 8332–8391, 8459–8518, and 8587–8643; these read AMRQ…IEDA, AMKA…INRA, SMNQ…IDQA, TMKA…ANDE, AMKK…INTI, SMNT…VERA, DMKK…IENA, AMKH…IKQL, AMEN…IEHA, AMKA…INSI, AMET…VDIV, AMKS…VRQA, VMGK…TKQA, IMGE…IDTF, AMKS…IQGL, AMKD…VLGL, KMKL…IQHL, and AMQG…ANII. A helical membrane pass occupies residues 9306-9324; it reads TVGVITLTGLLSSFWLVLA. 3 stretches are compositionally biased toward basic and acidic residues: residues 9363-9375, 9386-9395, and 9404-9413; these read DKEEQIQNDDKHS, EKQLSEEDIH, and QNSDNKDTKQ. Residues 9363 to 9439 form a disordered region; it reads DKEEQIQNDD…VVKTKKRSKK (77 aa). The segment covering 9414 to 9439 has biased composition (basic residues); it reads KKVTSKKKKTPQSTKKVVKTKKRSKK.

Its subcellular location is the cell membrane. The protein is Extracellular matrix-binding protein ebh (ebh) of Staphylococcus epidermidis (strain ATCC 12228 / FDA PCI 1200).